The following is a 467-amino-acid chain: Chromosomal replication initiator protein DnaA (467 aa).

Residues 1 to 90 (MSLSLWQQCL…KPVTQTPQAA (90 aa)) form a domain I, interacts with DnaA modulators region. A domain II region spans residues 91 to 130 (VTSNVAAPALVAQTQPQRAAPSTRSGWDNVPAPAEPTYRS). The segment at 131-347 (NVNVKHTFDN…GALNRVIANA (217 aa)) is domain III, AAA+ region. ATP contacts are provided by glycine 175, glycine 177, lysine 178, and threonine 179. The tract at residues 348–467 (NFTGRAITID…FSNLIRTLSS (120 aa)) is domain IV, binds dsDNA.

It belongs to the DnaA family. Oligomerizes as a right-handed, spiral filament on DNA at oriC.

The protein resides in the cytoplasm. Plays an essential role in the initiation and regulation of chromosomal replication. ATP-DnaA binds to the origin of replication (oriC) to initiate formation of the DNA replication initiation complex once per cell cycle. Binds the DnaA box (a 9 base pair repeat at the origin) and separates the double-stranded (ds)DNA. Forms a right-handed helical filament on oriC DNA; dsDNA binds to the exterior of the filament while single-stranded (ss)DNA is stabiized in the filament's interior. The ATP-DnaA-oriC complex binds and stabilizes one strand of the AT-rich DNA unwinding element (DUE), permitting loading of DNA polymerase. After initiation quickly degrades to an ADP-DnaA complex that is not apt for DNA replication. Binds acidic phospholipids. The chain is Chromosomal replication initiator protein DnaA from Shigella dysenteriae serotype 1 (strain Sd197).